A 444-amino-acid polypeptide reads, in one-letter code: MDEFQRNSNKHRSWQQFFLYPLFFREDLXAIAHYHHLDRSGSSEPTEILVSNFLSFLTVKRSXRRIRKQNNSISLLGNSDSNKLIEYNKNSSFQLILEGFTIVLEALFAMRSKXFXKGMDGWNSFRSIHCIFPFMEAKLPHSBYISDLRVPYSIHPEILVRIFRRWIRDVPSLHLLRSILHEWKKSFNRENLQKALITQRENTRFSLFLWNSYVYECESFLIPLIKRILNSQSLLYGSFPDRTHFEKKIKDIVLFPPHKISPKKIWLLKDSFIHYVRYGERSLIALKGTHLQVKKCRYHLFHFWQYYFHLWFQPYRICSLELSKTSFSFLGFFMHVKMRPLVVRAKMLDDLFITDLITNELNSTAPIRSILFSLAKEKFCDISGWPISKLSWTSLSDDDIXDRFDRIWXXLFHYYSGSINQDGLYHIKYILLLSCAKTLACKHK.

It belongs to the intron maturase 2 family. MatK subfamily.

It localises to the plastid. The protein localises to the chloroplast. Usually encoded in the trnK tRNA gene intron. Probably assists in splicing its own and other chloroplast group II introns. In Chamaecyparis lawsoniana (Lawson false cypress), this protein is Maturase K.